We begin with the raw amino-acid sequence, 360 residues long: Histidinol-phosphate aminotransferase (360 aa).

N6-(pyridoxal phosphate)lysine is present on Lys-221.

Belongs to the class-II pyridoxal-phosphate-dependent aminotransferase family. Histidinol-phosphate aminotransferase subfamily. Homodimer. Pyridoxal 5'-phosphate serves as cofactor.

The enzyme catalyses L-histidinol phosphate + 2-oxoglutarate = 3-(imidazol-4-yl)-2-oxopropyl phosphate + L-glutamate. Its pathway is amino-acid biosynthesis; L-histidine biosynthesis; L-histidine from 5-phospho-alpha-D-ribose 1-diphosphate: step 7/9. In Desulfitobacterium hafniense (strain Y51), this protein is Histidinol-phosphate aminotransferase.